Here is a 282-residue protein sequence, read N- to C-terminus: ADP-ribosyl cyclase/cyclic ADP-ribose hydrolase (282 aa).

The first 24 residues, Met-1–Ala-24, serve as a signal peptide directing secretion. 5 disulfide bridges follow: Cys-39–Cys-58, Cys-75–Cys-155, Cys-136–Cys-149, Cys-230–Cys-251, and Cys-263–Cys-272.

This sequence belongs to the ADP-ribosyl cyclase family. As to expression, ovotestis.

It is found in the cytoplasmic vesicle. It carries out the reaction NAD(+) = cyclic ADP-beta-D-ribose + nicotinamide + H(+). The enzyme catalyses NAD(+) + H2O = ADP-D-ribose + nicotinamide + H(+). It catalyses the reaction nicotinate + NADP(+) = nicotinate-adenine dinucleotide phosphate + nicotinamide. Its activity is regulated as follows. Activity is presumably regulated by its sequestration in vesicles before egg fertilization. After fertilization and upon NADase release, it could then be regulated via its potential phosphorylation sites. Its function is as follows. Synthesizes cyclic ADP-ribose (cADPR), a second messenger for calcium mobilization from endoplasmic reticulum. Might make the Ca(2+) mobilizer nicotinate-adenine dinucleotide phosphate. Does not have cADPR hydrolase activity. The sequence is that of ADP-ribosyl cyclase/cyclic ADP-ribose hydrolase from Aplysia kurodai (Kuroda's sea hare).